The following is a 1527-amino-acid chain: DNA (cytosine-5)-methyltransferase 1A (1527 aa).

Disordered stretches follow at residues 1 to 62 (MAKS…PKRA) and 661 to 718 (GDTK…KEIK). Acidic residues-rich tracts occupy residues 25-36 (EPVENENLESEF) and 664-692 (KEED…EVNV). Residues 709–718 (SSADTRKEIK) show a composition bias toward basic and acidic residues. BAH domains lie at 742–874 (LSIS…FSLP) and 910–1049 (ITYN…KQLP). Positions 1092-1526 (LATLDIFAGC…RKLKQAIDAK (435 aa)) constitute an SAM-dependent MTase C5-type domain. Cysteine 1197 is a catalytic residue.

The protein belongs to the class I-like SAM-binding methyltransferase superfamily. C5-methyltransferase family. In terms of tissue distribution, expressed in roots and inflorescences. Expressed in roots, panicles, anthers, pistils, endosperm and imbibed embryos. Expressed in tissues containing actively replicating and dividing cells, such as shoot and root meristems.

The protein resides in the nucleus. It catalyses the reaction a 2'-deoxycytidine in DNA + S-adenosyl-L-methionine = a 5-methyl-2'-deoxycytidine in DNA + S-adenosyl-L-homocysteine + H(+). Its function is as follows. Probably methylates CpG residues and maintains DNA methylation. May be involved in methylation-dependent gene silencing. May play a minor role in the maintenance of DNA methylation. The chain is DNA (cytosine-5)-methyltransferase 1A from Oryza sativa subsp. japonica (Rice).